The chain runs to 306 residues: Putative syntaxin-3 (306 aa).

The Cytoplasmic portion of the chain corresponds to 1 to 279 (MPRDRLKELQ…QKRARKMKVC (279 aa)). The segment at 40–180 (QDADFEMFLE…QLSDEEIENA (141 aa)) is required for the regulation of the defecation motor program. The t-SNARE coiled-coil homology domain maps to 204–266 (YDEVKSRADE…KQARGNVEEA (63 aa)). The chain crosses the membrane as a helical; Anchor for type IV membrane protein span at residues 280-300 (IIIGSIIAVLILILFIQSAVC). Residues 301–306 (HFTPIC) are Extracellular-facing.

Belongs to the syntaxin family. Expressed in body wall, pharyngeal, vulval and enteric muscles and in some head neurons.

It is found in the cell membrane. Functionally, potentially involved in docking of synaptic vesicles at presynaptic active zones. Acts in the intestine to regulate anterior body muscle contractions (aBOC) and the expulsion steps during the defecation motor program (DMP). The protein is Putative syntaxin-3 of Caenorhabditis elegans.